The following is a 146-amino-acid chain: Protein SprT-like (146 aa).

One can recognise a SprT-like domain in the interval Tyr-6–Ile-141. Residue His-64 coordinates Zn(2+). The active site involves Glu-65. His-68 provides a ligand contact to Zn(2+).

This sequence belongs to the SprT family. Requires Zn(2+) as cofactor.

It localises to the cytoplasm. The sequence is that of Protein SprT-like from Streptococcus thermophilus (strain CNRZ 1066).